Consider the following 489-residue polypeptide: Ribonuclease G (489 aa).

In terms of domain architecture, S1 motif spans 39-128 (GNIYKGRVSR…LTTDITLPSR (90 aa)). Mg(2+) is bound by residues Asp-304 and Asp-347.

This sequence belongs to the RNase E/G family. RNase G subfamily. In terms of assembly, homodimer, and possible higher multimers. It depends on Mg(2+) as a cofactor.

The protein localises to the cytoplasm. Its function is as follows. Acts in the processing of the 5'-end of precursors of 16S rRNA. Confers adaptive resistance to aminoglycoside antibiotics through modulation of 16S rRNA processing. An endoribonuclease, it prefers 5'-monophosphorylated substrates and cleaves single-stranded sites rich in A and U residues; also contributes to 23S rRNA processing, tRNA processing and mRNA turnover. Involved in decay of speF mRNA, has a preference for adenine nucleotides. The chain is Ribonuclease G from Salmonella typhimurium (strain SL1344).